Consider the following 413-residue polypeptide: MDPEAFSASLFKWDPRGAMPPPTRLLEAAVAPPPPPPVLPPPQPLSAAYSIRTRELGGLEELFQAYGIRYYTAAKIAELGFTVNTLLDMKDEELDDMMNSLSQIFRWELLVGERYGIKAAIRAERRRLEEEELRRRSHLLSDGGTNALDALSQEGLSEEPVQQQEREAVGSGGGGTTWEVVAAVGGGRMKQRRRKKVVSTGRERRGRASAEEDEETEEGQEDEWNINDAGGGISERQREHPFIVTEPGEVARGKKNGLDYLFHLYEQCRDFLIQVQNIAKERGEKCPTKVTNQVFRYAKKAGASYINKPKMRHYVHCYALHCLDEEASNALRRAFKERGENVGAWRQACYKPLVAIAARQGWDIDTIFNAHPRLAIWYVPTRLRQLCHSERSNAAAAASSSVSGGVGDHLPHF.

Disordered regions lie at residues E154 to T177 and Q191 to E239. The span at G201–A210 shows a compositional bias: basic and acidic residues. Over residues E211 to N225 the composition is skewed to acidic residues. 3 DNA-binding regions span residues R238–F242, N307–Y314, and Y378–T381.

This sequence belongs to the FLO/LFY family. As to expression, expressed in floral meristems and in indeterminate vegetative meristems.

It is found in the nucleus. Probable transcription factor that act to specify determinacy in the progenitor cells for both flowers and leaves. This is Floricaula/leafy homolog 1 (FL1) from Nicotiana tabacum (Common tobacco).